The chain runs to 319 residues: Cytochrome c biogenesis protein CcsA (319 aa).

The next 8 membrane-spanning stretches (helical) occupy residues Phe-15–Val-35, Gly-44–Gly-64, Leu-71–Phe-91, Leu-96–Phe-116, Met-141–Ile-161, Val-223–Asn-243, Trp-258–Leu-278, and Ala-284–Leu-304.

This sequence belongs to the CcmF/CycK/Ccl1/NrfE/CcsA family. May interact with Ccs1.

It localises to the plastid. The protein resides in the chloroplast thylakoid membrane. Its function is as follows. Required during biogenesis of c-type cytochromes (cytochrome c6 and cytochrome f) at the step of heme attachment. This chain is Cytochrome c biogenesis protein CcsA, found in Fagopyrum esculentum subsp. ancestrale (Wild buckwheat).